The primary structure comprises 473 residues: Eukaryotic translation initiation factor 2 subunit gamma (473 aa).

Positions 40-250 (QATINIGTIG…AICNIAPPNY (211 aa)) constitute a tr-type G domain. The segment at 49–56 (GHVAHGKS) is G1. 52-57 (AHGKSS) lines the GTP pocket. Residues 77–81 (NITIK) form a G2 region. Residues 135–138 (DCPG) are G3. Residues 193–196 (NKMD) and 228–230 (SAQ) each bind GTP. Positions 193 to 196 (NKMD) are G4. The segment at 228–230 (SAQ) is G5. Residues 458–470 (GKVRSGGTLCEVV) form an interacts with CDC123 region.

It belongs to the TRAFAC class translation factor GTPase superfamily. Classic translation factor GTPase family. EIF2G subfamily. In terms of assembly, eukaryotic translation initiation factor 2 eIF2 is a heterotrimeric complex composed of an alpha, a beta and a gamma subunit. The factors eIF-1, eIF-2, eIF-3, TIF5/eIF-5 and methionyl-tRNAi form a multifactor complex (MFC) that may bind to the 40S ribosome.

It is found in the cytoplasm. The protein localises to the cytosol. The catalysed reaction is GTP + H2O = GDP + phosphate + H(+). As a subunit of eukaryotic initiation factor 2 eIF2, involved in the early steps of protein synthesis. In the presence of GTP, eIF-2 forms a ternary complex with initiator tRNA Met-tRNAi and then recruits the 40S ribosomal complex and initiation factors eIF-1, eIF-1A and eIF-3 to form the 43S pre-initiation complex (43S PIC), a step that determines the rate of protein translation. The 43S PIC binds to mRNA and scans downstream to the initiation codon, where it forms a 48S initiation complex by codon-anticodon base pairing. This leads to the displacement of eIF-1 to allow GTPase-activating protein (GAP) eIF-5-mediated hydrolysis of eIF2-bound GTP. Hydrolysis of GTP and release of Pi, which makes GTP hydrolysis irreversible, causes the release of the eIF-2-GDP binary complex from the 40S subunit, an event that is essential for the subsequent joining of the 60S ribosomal subunit to form an elongation-competent 80S ribosome. In order for eIF-2 to recycle and catalyze another round of initiation, the GDP bound to eIF-2 must be exchanged with GTP by way of a reaction catalyzed by GDP-GTP exchange factor (GEF) eIF-2B. This is Eukaryotic translation initiation factor 2 subunit gamma from Cryptococcus neoformans var. grubii serotype A (strain H99 / ATCC 208821 / CBS 10515 / FGSC 9487) (Filobasidiella neoformans var. grubii).